Here is a 97-residue protein sequence, read N- to C-terminus: Plasmid stability protein StbC (97 aa).

In terms of biological role, involved in plasmid stability. In Pseudomonas syringae pv. tomato (strain ATCC BAA-871 / DC3000), this protein is Plasmid stability protein StbC (stbC).